The chain runs to 157 residues: MSRRRGKVEPRHIEGDPKYNDKVISKFINCLMVDGKKSVAESVFYDALEVIAKKTGQDPFAVFQEALENAKPQVEVKSRRVGGVTYQVPIEVRPERRLALGIRWLIKYSRGRNEKSMKNKLAAEFMEAQKGTGSAIKKKEDIRKMADANKAFSHYRW.

This sequence belongs to the universal ribosomal protein uS7 family. As to quaternary structure, part of the 30S ribosomal subunit. Contacts proteins S9 and S11.

One of the primary rRNA binding proteins, it binds directly to 16S rRNA where it nucleates assembly of the head domain of the 30S subunit. Is located at the subunit interface close to the decoding center, probably blocks exit of the E-site tRNA. The sequence is that of Small ribosomal subunit protein uS7 from Leptospira biflexa serovar Patoc (strain Patoc 1 / Ames).